A 168-amino-acid polypeptide reads, in one-letter code: ATFVGCSATRQTQLNAAASQAQTYAANALSYLNSHTSSTTRYTTWFGTFVTSRYNTVLSHFSSISSNTFSSYTFDCTCSDSGTYAFVNPSNFGYVTLCGAFWNAPVAGTDSRGGTLIHESSHFTRNGGTDDHVYGQAGAQSLARSNPAQAIDNADSHEYFAENNPALA.

Disulfide bonds link Cys-6–Cys-76 and Cys-78–Cys-98. His-118 serves as a coordination point for Zn(2+). Residue Glu-119 is part of the active site. Zn(2+) is bound by residues His-122 and Asp-131.

It depends on Zn(2+) as a cofactor.

It localises to the secreted. It catalyses the reaction Preferential cleavage in proteins: -Xaa-|-Lys- (in which Xaa may be Pro).. With respect to regulation, inhibited by chelating agents such as EDTA and 1,10-phenanthroline. This is Peptidyl-Lys metalloendopeptidase (MEP) from Pleurotus ostreatus (Oyster mushroom).